The primary structure comprises 185 residues: Large ribosomal subunit protein uL5 (185 aa).

Belongs to the universal ribosomal protein uL5 family. In terms of assembly, part of the 50S ribosomal subunit; part of the 5S rRNA/L5/L18/L25 subcomplex. Contacts the 5S rRNA and the P site tRNA. Forms a bridge to the 30S subunit in the 70S ribosome.

This is one of the proteins that bind and probably mediate the attachment of the 5S RNA into the large ribosomal subunit, where it forms part of the central protuberance. In the 70S ribosome it contacts protein S13 of the 30S subunit (bridge B1b), connecting the 2 subunits; this bridge is implicated in subunit movement. Contacts the P site tRNA; the 5S rRNA and some of its associated proteins might help stabilize positioning of ribosome-bound tRNAs. The protein is Large ribosomal subunit protein uL5 of Rhodopseudomonas palustris (strain HaA2).